Reading from the N-terminus, the 199-residue chain is Small ribosomal subunit protein uS4B (199 aa).

The region spanning 88-151 is the S4 RNA-binding domain; it reads CRLDNLVYRT…RKNKIFIDNF (64 aa).

This sequence belongs to the universal ribosomal protein uS4 family. In terms of assembly, part of the 30S ribosomal subunit. Contacts protein S5. The interaction surface between S4 and S5 is involved in control of translational fidelity.

Its function is as follows. One of the primary rRNA binding proteins, it binds directly to 16S rRNA where it nucleates assembly of the body of the 30S subunit. Functionally, with S5 and S12 plays an important role in translational accuracy. In Alkaliphilus metalliredigens (strain QYMF), this protein is Small ribosomal subunit protein uS4B.